The following is a 414-amino-acid chain: Histidine--tRNA ligase (414 aa).

Belongs to the class-II aminoacyl-tRNA synthetase family. As to quaternary structure, homodimer.

The protein resides in the cytoplasm. It catalyses the reaction tRNA(His) + L-histidine + ATP = L-histidyl-tRNA(His) + AMP + diphosphate + H(+). The protein is Histidine--tRNA ligase of Endomicrobium trichonymphae.